Consider the following 163-residue polypeptide: Putative C-type lectin protein FPV239 (163 aa).

One can recognise a C-type lectin domain in the interval 48 to 159; the sequence is CKEGWVGYNK…CFLPKKWICR (112 aa). Intrachain disulfides connect Cys-76–Cys-158 and Cys-137–Cys-150.

The polypeptide is Putative C-type lectin protein FPV239 (Fowlpox virus (strain NVSL) (FPV)).